A 249-amino-acid chain; its full sequence is Ribosomal RNA small subunit methyltransferase G (249 aa).

Residues Gly-86, Phe-91, and Arg-178 each coordinate S-adenosyl-L-methionine.

Belongs to the methyltransferase superfamily. RNA methyltransferase RsmG family.

Its subcellular location is the cytoplasm. Functionally, specifically methylates the N7 position of a guanine in 16S rRNA. The sequence is that of Ribosomal RNA small subunit methyltransferase G from Bifidobacterium adolescentis (strain ATCC 15703 / DSM 20083 / NCTC 11814 / E194a).